The sequence spans 168 residues: Endoribonuclease YbeY (168 aa).

Zn(2+) is bound by residues His-123, His-127, and His-133.

This sequence belongs to the endoribonuclease YbeY family. It depends on Zn(2+) as a cofactor.

It localises to the cytoplasm. Its function is as follows. Single strand-specific metallo-endoribonuclease involved in late-stage 70S ribosome quality control and in maturation of the 3' terminus of the 16S rRNA. The sequence is that of Endoribonuclease YbeY from Francisella tularensis subsp. holarctica (strain LVS).